The following is a 314-amino-acid chain: Carbamate kinase (314 aa).

This sequence belongs to the carbamate kinase family. As to quaternary structure, homodimer.

The catalysed reaction is hydrogencarbonate + NH4(+) + ATP = carbamoyl phosphate + ADP + H2O + H(+). It participates in metabolic intermediate metabolism; carbamoyl phosphate degradation; CO(2) and NH(3) from carbamoyl phosphate: step 1/1. This is Carbamate kinase (CBK) from Trichomonas vaginalis.